We begin with the raw amino-acid sequence, 383 residues long: ATP phosphoribosyltransferase regulatory subunit (383 aa).

It belongs to the class-II aminoacyl-tRNA synthetase family. HisZ subfamily. In terms of assembly, heteromultimer composed of HisG and HisZ subunits.

It localises to the cytoplasm. It functions in the pathway amino-acid biosynthesis; L-histidine biosynthesis; L-histidine from 5-phospho-alpha-D-ribose 1-diphosphate: step 1/9. Required for the first step of histidine biosynthesis. May allow the feedback regulation of ATP phosphoribosyltransferase activity by histidine. This Desulfitobacterium hafniense (strain Y51) protein is ATP phosphoribosyltransferase regulatory subunit.